Reading from the N-terminus, the 971-residue chain is Polyamine-modulated factor 1-binding protein 1 (971 aa).

6 coiled-coil regions span residues Asn37 to Ser69, Glu117 to Asn229, Leu282 to Glu325, Gln355 to Gln680, Gln706 to Glu827, and Ile879 to Thr916.

Expressed in testis and more specifically in ODF, the sperm tail specific cytoskeletal structure. Also expressed in epididymides and brain.

It is found in the cell projection. Its subcellular location is the cilium. The protein resides in the flagellum. Its function is as follows. Required for normal spermatogenesis. It functions as a scaffold protein that attaches the sperm head-tail connecting piece to the nuclear envelope, thus maintaining sperm head and tail integrity. May also be involved in the general organization of cellular cytoskeleton. The chain is Polyamine-modulated factor 1-binding protein 1 (Pmfbp1) from Rattus norvegicus (Rat).